The chain runs to 246 residues: Probable transcriptional regulatory protein COSY_0365 (246 aa).

Belongs to the TACO1 family.

Its subcellular location is the cytoplasm. This Vesicomyosocius okutanii subsp. Calyptogena okutanii (strain HA) protein is Probable transcriptional regulatory protein COSY_0365.